The following is a 568-amino-acid chain: 3-(3-hydroxy-phenyl)propionate/3-hydroxycinnamic acid hydroxylase (568 aa).

Residues 13–42 (DVVIVGAGPVGLTLANILGLQGVRTMIVEE) and 278–288 (FRKGRMFLAGD) each bind FAD.

Belongs to the PheA/TfdB FAD monooxygenase family. Requires FAD as cofactor.

The enzyme catalyses 3-(3-hydroxyphenyl)propanoate + NADH + O2 + H(+) = 3-(2,3-dihydroxyphenyl)propanoate + NAD(+) + H2O. It carries out the reaction (2E)-3-(3-hydroxyphenyl)prop-2-enoate + NADH + O2 + H(+) = (2E)-3-(2,3-dihydroxyphenyl)prop-2-enoate + NAD(+) + H2O. It functions in the pathway aromatic compound metabolism; 3-phenylpropanoate degradation. Catalyzes the insertion of one atom of molecular oxygen into position 2 of the phenyl ring of 3-(3-hydroxyphenyl)propionate (3-HPP) and hydroxycinnamic acid (3HCI). The polypeptide is 3-(3-hydroxy-phenyl)propionate/3-hydroxycinnamic acid hydroxylase (Mycobacterium sp. (strain JLS)).